The following is a 255-amino-acid chain: Putative F-box protein L126 (255 aa).

The F-box domain maps to 1–46 (MLPEEILFMVFSFLDVKELIACSHACSHACSQWRRICSDKLLWVQK).

This Acanthamoeba polyphaga (Amoeba) protein is Putative F-box protein L126.